Consider the following 954-residue polypeptide: Xylanolytic transcriptional activator xlnR (954 aa).

2 disordered regions span residues 1–39 (MSTTSLQHFPHSYSPFSSSRSLNRMAQSQTSGLDTLAEG) and 51–93 (REAA…SQRD). The span at 8–21 (HFPHSYSPFSSSRS) shows a compositional bias: low complexity. A compositionally biased stretch (polar residues) spans 22–33 (LNRMAQSQTSGL). The span at 64–78 (GKPKDQFQVDNDNHH) shows a compositional bias: basic and acidic residues. Positions 82 to 91 (SLSNFKNPSQ) are enriched in polar residues. The zn(2)-C6 fungal-type DNA-binding region spans 119–145 (CDQCNQLRTKCDGQNPCAHCIDFGLTC). 4 disordered regions span residues 173–226 (ATNS…HSEA), 310–333 (LMNPQEPNSTSISHFRLGSSTENP), 566–607 (ELPP…PGNT), and 758–777 (MDGSHPNHVSPSGRSSSTVE). A compositionally biased stretch (polar residues) spans 174-183 (TNSGQPNGSS). Positions 574-590 (ARPDAERDGDPDADLSK) are enriched in basic and acidic residues. Over residues 764–777 (NHVSPSGRSSSTVE) the composition is skewed to polar residues.

Belongs to the xlnR/xlr1 family.

Its subcellular location is the nucleus. Functionally, transcriptional activator of the xylanolytic system. Involved in the regulation of extracellular cellulolytic and xylanolytic genes and in the regulation of the intracellular activities of D-xylose catabolic genes in the pentose catabolic pathway (PCP) in response to the presence of D-xylose. The protein is Xylanolytic transcriptional activator xlnR (xlnR) of Aspergillus fumigatus (strain ATCC MYA-4609 / CBS 101355 / FGSC A1100 / Af293) (Neosartorya fumigata).